Reading from the N-terminus, the 137-residue chain is SPbeta prophage-derived uncharacterized protein YoqU (137 aa).

The chain is SPbeta prophage-derived uncharacterized protein YoqU (yoqU) from Bacillus subtilis (strain 168).